A 491-amino-acid chain; its full sequence is Probable cytosol aminopeptidase (491 aa).

Mn(2+)-binding residues include Lys264 and Asp269. Lys276 is an active-site residue. 3 residues coordinate Mn(2+): Asp287, Asp346, and Glu348. Arg350 is a catalytic residue.

Belongs to the peptidase M17 family. Mn(2+) serves as cofactor.

It localises to the cytoplasm. It carries out the reaction Release of an N-terminal amino acid, Xaa-|-Yaa-, in which Xaa is preferably Leu, but may be other amino acids including Pro although not Arg or Lys, and Yaa may be Pro. Amino acid amides and methyl esters are also readily hydrolyzed, but rates on arylamides are exceedingly low.. The enzyme catalyses Release of an N-terminal amino acid, preferentially leucine, but not glutamic or aspartic acids.. In terms of biological role, presumably involved in the processing and regular turnover of intracellular proteins. Catalyzes the removal of unsubstituted N-terminal amino acids from various peptides. The protein is Probable cytosol aminopeptidase of Xylella fastidiosa (strain 9a5c).